We begin with the raw amino-acid sequence, 155 residues long: Protein archease-like (155 aa).

Residues Asp26, Asp154, and Ile155 each contribute to the Ca(2+) site.

Belongs to the archease family.

Functionally, component of the tRNA-splicing ligase complex required to facilitate the enzymatic turnover of catalytic subunit RtcB. The polypeptide is Protein archease-like (Caenorhabditis briggsae).